Here is a 152-residue protein sequence, read N- to C-terminus: Ninjurin-1 (152 aa).

At methionine 1 the chain carries N-acetylmethionine. The disordered stretch occupies residues 1–26 (MDSGTEEYELNGGLPPGTPGSPDASP). Topologically, residues 1–78 (MDSGTEEYEL…EQGPSFAFYV (78 aa)) are extracellular. Residues serine 21 and serine 25 each carry the phosphoserine modification. Residues 26-37 (PARWGWRHGPIN) are N-terminal adhesion motif. The required to induce plasma membrane rupture stretch occupies residues 40–69 (HYASKKSAAESMLDIALLMANASQLKAVVE). The segment at 44-55 (KKSAAESMLDIA) is helix alpha1. The tract at residues 58-74 (MANASQLKAVVEQGPSF) is helix alpha2. Asparagine 60 is a glycosylation site (N-linked (GlcNAc...) asparagine). Residues 79-103 (PLVVLISISLVLQIGVGVLLIFLVK) traverse the membrane as a helical segment. Over 104–113 (YDLNNPAKHA) the chain is Cytoplasmic. A helical transmembrane segment spans residues 114–138 (KLDFLNNLATGLVFIIVVVNIFITA). Residues 139–152 (FGVQKPLMDMAPQQ) lie on the Extracellular side of the membrane.

The protein belongs to the ninjurin family. Homodimer; in absence of death stimuli, forms an inactive homodimer. Homooligomer; in response to death stimuli, homooligomerizes into long, highly branched filaments and large, ring-shaped structures in the membrane. Cleaved by MMP9 protease to generate the Secreted ninjurin-1 form. In terms of processing, N-linked glycosylation is required for homooligomerization. Widely expressed in both adult and embryonic tissues, primarily those of epithelial origin.

It localises to the cell membrane. It is found in the synaptic cell membrane. Its subcellular location is the secreted. Its activity is regulated as follows. In response to death stimuli, homooligomerizes and disrupts membrane integrity by introducing the hydrophilic faces of alpha1 and alpha2 helices into the hydrophobic membrane. Homooligomerization and ability to mediate plasma membrane rupture is inhibited by glycine; it is unclear whether glycine directly or indirectly inhibits homooligomerization. In normal conditions, NINJ1 is autoinhibited via formation of a homodimer: in the inactive homodimer, the alpha1 and alpha2 helices (residues 44-74) form a single transmembrane region without a kink, in which hydrophilic faces of alpha1 and alpha2 helices are sequestered. Its function is as follows. Effector of various programmed cell death, such as pyroptosis and necroptosis, which mediates plasma membrane rupture (cytolysis). Oligomerizes in response to death stimuli and forms ring-like structures on the plasma membrane: acts by cutting and shedding membrane disks, like a cookie cutter, leading to membrane damage and loss that cannot be repaired by the cell. Plasma membrane rupture leads to release intracellular molecules named damage-associated molecular patterns (DAMPs) that propagate the inflammatory response. Mechanistically, mediates plasma membrane rupture by introducing hydrophilic faces of 2 alpha helices into the hydrophobic membrane. Induces plasma membrane rupture downstream of Gasdermin (GSDMA, GSDMB, GSDMC, GSDMD, or GSDME) or MLKL during pyroptosis or necroptosis, respectively. Acts as an effector of PANoptosis downstream of CASP1, CASP4, CASP8 and RIPK3. Also induces plasma membrane rupture in response to cell swelling caused by osmotic stress and ferroptosis downstream of lipid peroxidation. Acts as a regulator of Toll-like receptor 4 (TLR4) signaling triggered by lipopolysaccharide (LPS) during systemic inflammation; directly binds LPS. Involved in leukocyte migration during inflammation by promoting transendothelial migration of macrophages via homotypic binding. Promotes the migration of monocytes across the brain endothelium to central nervous system inflammatory lesions. Also acts as a homophilic transmembrane adhesion molecule involved in various processes such as axonal growth, cell chemotaxis and angiogenesis. Promotes cell adhesion by mediating homophilic interactions via its extracellular N-terminal adhesion motif (N-NAM). Involved in the progression of the inflammatory stress by promoting cell-to-cell interactions between immune cells and endothelial cells. Plays a role in nerve regeneration by promoting maturation of Schwann cells. Acts as a regulator of angiogenesis. Promotes the formation of new vessels by mediating the interaction between capillary pericyte cells and endothelial cells. Promotes osteoclasts development by enhancing the survival of prefusion osteoclasts. Also involved in striated muscle growth and differentiation. In terms of biological role, secreted form generated by cleavage, which has chemotactic activity. Acts as an anti-inflammatory mediator by promoting monocyte recruitment, thereby ameliorating atherosclerosis. The polypeptide is Ninjurin-1 (Homo sapiens (Human)).